Consider the following 226-residue polypeptide: Glutathione S-transferase-like protein gedE (226 aa).

The GST N-terminal domain occupies 4–85; that stretch reads LLPIKVWGQG…YLVERYDTAH (82 aa). The region spanning 92–226 is the GST C-terminal domain; that stretch reads DTNDAQHARQ…VLSAVMPPPS (135 aa).

The protein belongs to the GST superfamily.

Its pathway is secondary metabolite biosynthesis. In terms of biological role, glutathione S-transferase-like protein; part of the gene cluster that mediates the biosynthesis of geodin, an intermediate in the biosynthesis of other natural products. The pathway begins with the synthesis of atrochrysone thioester by the polyketide synthase (PKS) gedC. The atrochrysone carboxyl ACP thioesterase gedB then breaks the thioester bond and releases the atrochrysone carboxylic acid from gedC. The atrochrysone carboxylic acid is then converted to atrochrysone which is further transformed into emodinanthrone. The next step is performed by the emodinanthrone oxygenase gedH that catalyzes the oxidation of emodinanthrone to emodin. Emodin O-methyltransferase encoded probably by gedA then catalyzes methylation of the 8-hydroxy group of emodin to form questin. Ring cleavage of questin by questin oxidase gedK leads to desmethylsulochrin via several intermediates including questin epoxide. Another methylation step probably catalyzed by methyltransferase gedG leads to the formation of sulochrin which is further converted to dihydrogeodin by the sulochrin halogenase gedL. Finally, the dihydrogeodin oxidase gedJ catalyzes the stereospecific phenol oxidative coupling reaction converting dihydrogeodin to geodin. The polypeptide is Glutathione S-transferase-like protein gedE (Aspergillus terreus (strain NIH 2624 / FGSC A1156)).